Here is a 260-residue protein sequence, read N- to C-terminus: Putative protein phosphatase 2C-like protein 44 (260 aa).

The PPM-type phosphatase domain occupies 41–259 (YYTVDRLSYA…SSISCVVIRF (219 aa)).

It belongs to the PP2C family.

This Arabidopsis thaliana (Mouse-ear cress) protein is Putative protein phosphatase 2C-like protein 44.